The primary structure comprises 273 residues: Putative phosphoenolpyruvate synthase regulatory protein (273 aa).

Residue 153 to 160 (AVSRAGKT) coordinates ADP.

The protein belongs to the pyruvate, phosphate/water dikinase regulatory protein family. PSRP subfamily.

The catalysed reaction is [pyruvate, water dikinase] + ADP = [pyruvate, water dikinase]-phosphate + AMP + H(+). The enzyme catalyses [pyruvate, water dikinase]-phosphate + phosphate + H(+) = [pyruvate, water dikinase] + diphosphate. Its function is as follows. Bifunctional serine/threonine kinase and phosphorylase involved in the regulation of the phosphoenolpyruvate synthase (PEPS) by catalyzing its phosphorylation/dephosphorylation. This is Putative phosphoenolpyruvate synthase regulatory protein from Stenotrophomonas maltophilia (strain R551-3).